The sequence spans 165 residues: Putative 1,2-phenylacetyl-CoA epoxidase, subunit D (165 aa).

Monomer.

It functions in the pathway aromatic compound metabolism; phenylacetate degradation. Functionally, possible component of 1,2-phenylacetyl-CoA epoxidase multicomponent enzyme system which catalyzes the reduction of phenylacetyl-CoA (PA-CoA) to form 1,2-epoxyphenylacetyl-CoA. The subunit D may have a function related to the maturation of the monooxygenase complex, rather than direct involvement in catalysis. PaaD could assist either in maturation of PaaE or PaaA. The sequence is that of Putative 1,2-phenylacetyl-CoA epoxidase, subunit D (paaD) from Escherichia coli (strain K12).